The primary structure comprises 248 residues: Proteasome subunit alpha (248 aa).

The protein belongs to the peptidase T1A family. In terms of assembly, the 20S proteasome core is composed of 14 alpha and 14 beta subunits that assemble into four stacked heptameric rings, resulting in a barrel-shaped structure. The two inner rings, each composed of seven catalytic beta subunits, are sandwiched by two outer rings, each composed of seven alpha subunits. The catalytic chamber with the active sites is on the inside of the barrel. Has a gated structure, the ends of the cylinder being occluded by the N-termini of the alpha-subunits. Is capped at one or both ends by the proteasome regulatory ATPase, PAN.

Its subcellular location is the cytoplasm. With respect to regulation, the formation of the proteasomal ATPase PAN-20S proteasome complex, via the docking of the C-termini of PAN into the intersubunit pockets in the alpha-rings, triggers opening of the gate for substrate entry. Interconversion between the open-gate and close-gate conformations leads to a dynamic regulation of the 20S proteasome proteolysis activity. Functionally, component of the proteasome core, a large protease complex with broad specificity involved in protein degradation. The protein is Proteasome subunit alpha of Methanothermobacter thermautotrophicus (strain ATCC 29096 / DSM 1053 / JCM 10044 / NBRC 100330 / Delta H) (Methanobacterium thermoautotrophicum).